The primary structure comprises 188 residues: Large ribosomal subunit protein bL32m (188 aa).

Zn(2+) is bound by residues Cys-110, Cys-113, Cys-123, and Cys-126. Positions 164-188 are disordered; that stretch reads TPSEQDQGKRIIERDRKRPSWFTQN. Residues 169–181 show a composition bias toward basic and acidic residues; that stretch reads DQGKRIIERDRKR.

Belongs to the bacterial ribosomal protein bL32 family. Component of the mitochondrial large ribosomal subunit (mt-LSU). Mature mammalian 55S mitochondrial ribosomes consist of a small (28S) and a large (39S) subunit. The 28S small subunit contains a 12S ribosomal RNA (12S mt-rRNA) and 30 different proteins. The 39S large subunit contains a 16S rRNA (16S mt-rRNA), a copy of mitochondrial valine transfer RNA (mt-tRNA(Val)), which plays an integral structural role, and 52 different proteins. bL32m has a zinc binding site. MRPL32 precursor is processed by the m-AAA protease (composed of AFG3L2 and SPG7), which cleaves the N-terminal transit peptide. Cleavage by the m-AAA protease takes place prior to assembly into the large subunit, an essential step for mitochondrial ribosome (mitoribosome) assembly. Proper processing by the m-AAA protease is dependent on the zinc-binding region within the tightly folded C-terminal domain of MRPL32: zinc-dependent folding halts degradation initiated from the N-terminus and triggers the release of mature MRPL32.

Its subcellular location is the mitochondrion. Component of the mitochondrial large ribosomal subunit (mt-LSU). The mitochondrial ribosome (mitoribosome) is a large ribonucleoprotein complex responsible for the synthesis of proteins inside mitochondria. The protein is Large ribosomal subunit protein bL32m (MRPL32) of Homo sapiens (Human).